Consider the following 373-residue polypeptide: UDP-N-acetylglucosamine--N-acetylmuramyl-(pentapeptide) pyrophosphoryl-undecaprenol N-acetylglucosamine transferase (373 aa).

Residues 15–17, asparagine 126, arginine 170, serine 198, and glutamine 300 each bind UDP-N-acetyl-alpha-D-glucosamine; that span reads TGG.

It belongs to the glycosyltransferase 28 family. MurG subfamily.

It localises to the cell inner membrane. The enzyme catalyses di-trans,octa-cis-undecaprenyl diphospho-N-acetyl-alpha-D-muramoyl-L-alanyl-D-glutamyl-meso-2,6-diaminopimeloyl-D-alanyl-D-alanine + UDP-N-acetyl-alpha-D-glucosamine = di-trans,octa-cis-undecaprenyl diphospho-[N-acetyl-alpha-D-glucosaminyl-(1-&gt;4)]-N-acetyl-alpha-D-muramoyl-L-alanyl-D-glutamyl-meso-2,6-diaminopimeloyl-D-alanyl-D-alanine + UDP + H(+). The protein operates within cell wall biogenesis; peptidoglycan biosynthesis. In terms of biological role, cell wall formation. Catalyzes the transfer of a GlcNAc subunit on undecaprenyl-pyrophosphoryl-MurNAc-pentapeptide (lipid intermediate I) to form undecaprenyl-pyrophosphoryl-MurNAc-(pentapeptide)GlcNAc (lipid intermediate II). The protein is UDP-N-acetylglucosamine--N-acetylmuramyl-(pentapeptide) pyrophosphoryl-undecaprenol N-acetylglucosamine transferase of Methylobacterium nodulans (strain LMG 21967 / CNCM I-2342 / ORS 2060).